The following is a 984-amino-acid chain: MPPPAEVTDPSHAPAVLRQLNEQRLRGLFCDVTLIAGDTKFPAHRSVLAASSPFFREALLASAPLPLPPVTGGSAPSPATTTAASSSSSPPPPASPHSSSPPRVLELPGVPAAAFSDVLNFIYSARLALPGGGGDGAAVAEIGALGRRLGISRLQGLGEGGDTWVPPAPSSMVTSEPNEDSLGPGLRTDGGWEGDKAEPLTPDSQPRRPFPCPRCGKSFIHPKRLQTHEAQCRRGSNTRGSAGLGPGGSGPGGPAGVDASALPQPVSFRDGPEHVVKVVGGHVLYVCAACERSYVTLSSLKRHSNVHSWRRKYPCRYCEKVFALAEYRTKHEVWHTGERRYQCIFCWETFVTYYNLKTHQRAFHGISPGLLASEKTPNGGYKPKLNTLKLYRLLPMRAAKRPYKTYSQGAPEAPLSPSLHTPVPAVMPASPQPLLPSVPEPGPPHSVITFAHPAPSVIVHGSSSSGAAGGGPVGTGGSQAASVITYTTPPRPPKKREYPPPPPEPAATPTSPASTAVIPATAAGPATATEEAKGRNLRAGRTLTYTAKPVGGVSGSGGSPTGTGRGSSQLQAPPPLCQITVRIGEEAIVKRRISETDLRPGELSGEEVEESEEEEEEEEEEDQEDQEESKAGGEDQLWRPYYSYKPKRKAGATASGLSGLPRGRRPPRWRQKLERRGWEETPAVEGPGGRGRGERRHRCGDCAQAFATLRKLRKHQEAHSGGSHNSRTGRRSSTRFTCPHCAKVCKTAAALNRHGQRHAVERPGGTPTPVIAYSKGSIGTRPTDVKEEAPQEMQVSSSSGEAGGGSAAAAAAEASESASLQDPVISGGEEPPVAGGGGYVYPPVQEFPLALIGGSRDPGAGKGKPGNEGPVGASEGNRMEEMGTAKVTFYPEPYPLVYGPQLLAAYPYNFSNLAALPVALNMVLPDEKGGGALPFLPGVFGYAVNPQTAPPTPPTPPPPLPLPVPPKGVGEMTGVERTQKGDVG.

One can recognise a BTB domain in the interval 30 to 131 (CDVTLIAGDT…IYSARLALPG (102 aa)). A Glycyl lysine isopeptide (Lys-Gly) (interchain with G-Cter in SUMO2) cross-link involves residue Lys40. Disordered stretches follow at residues 71-104 (TGGS…PPRV), 172-210 (MVTS…RRPF), and 227-262 (THEA…ASAL). Residues 74-88 (SAPSPATTTAASSSS) show a composition bias toward low complexity. Positions 165–324 (VPPAPSSMVT…CRYCEKVFAL (160 aa)) are interaction with CBFA2T3. The C2H2-type 1; atypical zinc finger occupies 210 to 232 (FPCPRCGKSFIHPKRLQTHEAQC). Over residues 242–255 (AGLGPGGSGPGGPA) the composition is skewed to gly residues. 3 C2H2-type zinc fingers span residues 285 to 307 (YVCA…SNVH), 313 to 335 (YPCR…EVWH), and 341 to 364 (YQCI…RAFH). Ser367 is modified (phosphoserine). Residues 461–575 (GSSSSGAAGG…GSSQLQAPPP (115 aa)) form a disordered region. Positions 467-477 (AAGGGPVGTGG) are enriched in gly residues. Low complexity-rich tracts occupy residues 478–488 (SQAASVITYTT) and 507–529 (ATPT…ATAT). Lys548 is covalently cross-linked (Glycyl lysine isopeptide (Lys-Gly) (interchain with G-Cter in SUMO2)). The segment covering 552 to 565 (GVSGSGGSPTGTGR) has biased composition (gly residues). A Glycyl lysine isopeptide (Lys-Gly) (interchain with G-Cter in SUMO2) cross-link involves residue Lys590. Disordered regions lie at residues 593-696 (ISET…GERR), 713-734 (RKHQ…RSST), 756-836 (QRHA…VAGG), 853-876 (GGSR…ASEG), and 947-984 (QTAP…GDVG). Positions 604–627 (SGEEVEESEEEEEEEEEEDQEDQE) are enriched in acidic residues. Basic and acidic residues predominate over residues 628–637 (ESKAGGEDQL). 2 consecutive C2H2-type zinc fingers follow at residues 697–719 (HRCG…QEAH) and 736–758 (FTCP…GQRH). Phosphothreonine; by HIPK2 occurs at positions 766 and 768. Low complexity predominate over residues 807–819 (AAAAAAEASESAS). Over residues 948–966 (TAPPTPPTPPPPLPLPVPP) the composition is skewed to pro residues. Position 955 is a phosphothreonine; by HIPK2 (Thr955).

As to quaternary structure, interacts with HIPK2. Interacts with CBFA2T3. Interacts with ZBTB38. In terms of processing, phosphorylated by HIPK2. This phosphorylation reduces stability and triggers ZBTB4 protein degradation in response to DNA damage.

It is found in the nucleus. Its subcellular location is the chromosome. Transcriptional repressor with bimodal DNA-binding specificity. Represses transcription in a methyl-CpG-dependent manner. Binds with a higher affinity to methylated CpG dinucleotides in the consensus sequence 5'-CGCG-3' but can also bind to the non-methylated consensus sequence 5'-CTGCNA-3' also known as the consensus kaiso binding site (KBS). Can also bind specifically to a single methyl-CpG pair and can bind hemimethylated DNA but with a lower affinity compared to methylated DNA. Plays a role in postnatal myogenesis, may be involved in the regulation of satellite cells self-renewal. The chain is Zinc finger and BTB domain-containing protein 4 (Zbtb4) from Rattus norvegicus (Rat).